Reading from the N-terminus, the 528-residue chain is Na(+)/H(+) antiporter NhaB (528 aa).

A run of 11 helical transmembrane segments spans residues 23-45, 66-86, 95-115, 139-159, 203-223, 241-261, 310-330, 349-369, 390-410, 448-468, and 476-496; these read FAIL…VAGW, PGGL…SQVL, VLLL…LLLF, AFLS…AVAV, LLMH…VGEP, LRMS…CFLV, LIIG…SVII, EEAL…GVII, LVIF…VFVG, ATPN…APLI, and VWMA…AIQF.

The protein belongs to the NhaB Na(+)/H(+) (TC 2.A.34) antiporter family.

It localises to the cell inner membrane. It carries out the reaction 2 Na(+)(in) + 3 H(+)(out) = 2 Na(+)(out) + 3 H(+)(in). In terms of biological role, na(+)/H(+) antiporter that extrudes sodium in exchange for external protons. The protein is Na(+)/H(+) antiporter NhaB of Shewanella piezotolerans (strain WP3 / JCM 13877).